Consider the following 251-residue polypeptide: uncharacterized protein (251 aa).

2 disordered regions span residues 1 to 92 and 137 to 251; these read MGRP…PGSA and KPTP…LRTH. Residues 69–92 show a composition bias toward low complexity; that stretch reads AEGAPALLGGSPSSGSPGHPPGSA. The span at 155–172 shows a compositional bias: polar residues; it reads SESSWQLPQLPAGSTSGS.

This is an uncharacterized protein from Homo sapiens (Human).